A 206-amino-acid chain; its full sequence is Protein MIS12 homolog (206 aa).

Residues Asp102–Gln206 are a coiled coil.

This sequence belongs to the mis12 family. Component of the MIS12 complex composed of MIS12, DSN1, NSL1 and PMF1. Also interacts with KNL1, CBX3, CBX5, NDC80 and ZWINT.

It is found in the chromosome. The protein localises to the centromere. It localises to the kinetochore. In terms of biological role, part of the MIS12 complex which is required for normal chromosome alignment and segregation and for kinetochore formation during mitosis. Essential for proper kinetochore microtubule attachments. The chain is Protein MIS12 homolog from Mus musculus (Mouse).